The chain runs to 367 residues: Quinolinate synthase (367 aa).

Iminosuccinate is bound by residues His-45 and Ser-62. [4Fe-4S] cluster is bound at residue Cys-109. Iminosuccinate is bound by residues 140–142 (YVN) and Ser-161. Cys-229 contacts [4Fe-4S] cluster. Iminosuccinate is bound by residues 255 to 257 (HPE) and Thr-272. Cys-319 is a [4Fe-4S] cluster binding site.

It belongs to the quinolinate synthase family. Type 3 subfamily. [4Fe-4S] cluster is required as a cofactor.

Its subcellular location is the cytoplasm. It catalyses the reaction iminosuccinate + dihydroxyacetone phosphate = quinolinate + phosphate + 2 H2O + H(+). It functions in the pathway cofactor biosynthesis; NAD(+) biosynthesis; quinolinate from iminoaspartate: step 1/1. Catalyzes the condensation of iminoaspartate with dihydroxyacetone phosphate to form quinolinate. This Geobacillus thermodenitrificans (strain NG80-2) protein is Quinolinate synthase.